Here is a 312-residue protein sequence, read N- to C-terminus: L-lactate dehydrogenase (312 aa).

Residues Val-11, Asp-32, Arg-37, and 76 to 77 (GA) each bind NAD(+). Residues Gln-79, Arg-85, and 117-120 (NPVD) contribute to the substrate site. NAD(+) contacts are provided by residues 115 to 117 (VSN) and Thr-140. 145–148 (DTAR) lines the substrate pocket. Beta-D-fructose 1,6-bisphosphate contacts are provided by Arg-150 and His-165. His-172 (proton acceptor) is an active-site residue. Phosphotyrosine is present on Tyr-217. Thr-226 contacts substrate.

This sequence belongs to the LDH/MDH superfamily. LDH family. In terms of assembly, homotetramer.

The protein localises to the cytoplasm. It catalyses the reaction (S)-lactate + NAD(+) = pyruvate + NADH + H(+). It functions in the pathway fermentation; pyruvate fermentation to lactate; (S)-lactate from pyruvate: step 1/1. Allosterically activated by fructose 1,6-bisphosphate (FBP). Catalyzes the conversion of lactate to pyruvate. The chain is L-lactate dehydrogenase from Pseudothermotoga lettingae (strain ATCC BAA-301 / DSM 14385 / NBRC 107922 / TMO) (Thermotoga lettingae).